A 151-amino-acid chain; its full sequence is Endoribonuclease YbeY (151 aa).

Zn(2+) contacts are provided by histidine 108, histidine 112, and aspartate 118.

The protein belongs to the endoribonuclease YbeY family. Zn(2+) serves as cofactor.

Its subcellular location is the cytoplasm. Functionally, single strand-specific metallo-endoribonuclease involved in late-stage 70S ribosome quality control and in maturation of the 3' terminus of the 16S rRNA. The protein is Endoribonuclease YbeY of Porphyromonas gingivalis (strain ATCC BAA-308 / W83).